The sequence spans 786 residues: LPS-assembly protein LptD (786 aa).

An N-terminal signal peptide occupies residues 1–39; it reads MPPKPLFPNVFPGDGAPRKRRLALALLAVPGLVPAVSYA. The interval 767-786 is disordered; the sequence is PGYTPLPPPPPPMSRFSNYE. A compositionally biased stretch (pro residues) spans 770 to 779; that stretch reads TPLPPPPPPM.

Belongs to the LptD family. As to quaternary structure, component of the lipopolysaccharide transport and assembly complex. Interacts with LptE and LptA.

It is found in the cell outer membrane. Functionally, together with LptE, is involved in the assembly of lipopolysaccharide (LPS) at the surface of the outer membrane. The protein is LPS-assembly protein LptD of Burkholderia cenocepacia (strain HI2424).